We begin with the raw amino-acid sequence, 355 residues long: DNA polymerase IV (355 aa).

Residues 7–188 form the UmuC domain; sequence IIHIDMDCFY…LPVRKLFGVG (182 aa). 2 residues coordinate Mg(2+): Asp11 and Asp106. Glu107 is an active-site residue.

The protein belongs to the DNA polymerase type-Y family. In terms of assembly, monomer. Requires Mg(2+) as cofactor.

The protein localises to the cytoplasm. It carries out the reaction DNA(n) + a 2'-deoxyribonucleoside 5'-triphosphate = DNA(n+1) + diphosphate. Functionally, poorly processive, error-prone DNA polymerase involved in untargeted mutagenesis. Copies undamaged DNA at stalled replication forks, which arise in vivo from mismatched or misaligned primer ends. These misaligned primers can be extended by PolIV. Exhibits no 3'-5' exonuclease (proofreading) activity. May be involved in translesional synthesis, in conjunction with the beta clamp from PolIII. The sequence is that of DNA polymerase IV from Legionella pneumophila (strain Corby).